A 242-amino-acid polypeptide reads, in one-letter code: Biosynthetic peptidoglycan transglycosylase (242 aa).

The helical transmembrane segment at 19–39 (LMVVLAVFWAGGIALFSVAPV) threads the bilayer.

It belongs to the glycosyltransferase 51 family.

Its subcellular location is the cell inner membrane. The catalysed reaction is [GlcNAc-(1-&gt;4)-Mur2Ac(oyl-L-Ala-gamma-D-Glu-L-Lys-D-Ala-D-Ala)](n)-di-trans,octa-cis-undecaprenyl diphosphate + beta-D-GlcNAc-(1-&gt;4)-Mur2Ac(oyl-L-Ala-gamma-D-Glu-L-Lys-D-Ala-D-Ala)-di-trans,octa-cis-undecaprenyl diphosphate = [GlcNAc-(1-&gt;4)-Mur2Ac(oyl-L-Ala-gamma-D-Glu-L-Lys-D-Ala-D-Ala)](n+1)-di-trans,octa-cis-undecaprenyl diphosphate + di-trans,octa-cis-undecaprenyl diphosphate + H(+). Its pathway is cell wall biogenesis; peptidoglycan biosynthesis. Its function is as follows. Peptidoglycan polymerase that catalyzes glycan chain elongation from lipid-linked precursors. The polypeptide is Biosynthetic peptidoglycan transglycosylase (Shigella boydii serotype 4 (strain Sb227)).